The following is a 108-amino-acid chain: Large ribosomal subunit protein uL24 (108 aa).

Belongs to the universal ribosomal protein uL24 family. As to quaternary structure, part of the 50S ribosomal subunit.

In terms of biological role, one of two assembly initiator proteins, it binds directly to the 5'-end of the 23S rRNA, where it nucleates assembly of the 50S subunit. One of the proteins that surrounds the polypeptide exit tunnel on the outside of the subunit. The chain is Large ribosomal subunit protein uL24 from Mycoplasmopsis synoviae (strain 53) (Mycoplasma synoviae).